Consider the following 209-residue polypeptide: Uracil phosphoribosyltransferase (209 aa).

5-phospho-alpha-D-ribose 1-diphosphate is bound by residues R79, R104, and 131–139 (DPMLATGGS). Residues I194 and 199-201 (GDA) contribute to the uracil site. D200 contacts 5-phospho-alpha-D-ribose 1-diphosphate.

It belongs to the UPRTase family. Mg(2+) serves as cofactor.

It catalyses the reaction UMP + diphosphate = 5-phospho-alpha-D-ribose 1-diphosphate + uracil. The protein operates within pyrimidine metabolism; UMP biosynthesis via salvage pathway; UMP from uracil: step 1/1. With respect to regulation, allosterically activated by GTP. Its function is as follows. Catalyzes the conversion of uracil and 5-phospho-alpha-D-ribose 1-diphosphate (PRPP) to UMP and diphosphate. The protein is Uracil phosphoribosyltransferase of Lactobacillus gasseri (strain ATCC 33323 / DSM 20243 / BCRC 14619 / CIP 102991 / JCM 1131 / KCTC 3163 / NCIMB 11718 / NCTC 13722 / AM63).